A 367-amino-acid polypeptide reads, in one-letter code: MDLSLTNRQQQVLRATVDHYIATAEPVGSKALAREYALSISPATIRNVMGRLEEEGLLFQPHTSAGRVPSDFGYRHYVDELVMPSTTLMSQIKQALDQKLRTDSWIFEVLLRDAAQILATLSGCVALITLPQAATSTIRHLHLVQVEPHRVMLILVTDAYETQSVMMELPHSAWDEVDPDRIEQELQILSNFLNHHFVGSSLQDLVALDPCELDREFQKYTDFLKILLTDLTQQCKSLSPKNILVGGLAEVLRQPEFSELQQAQTLIHLLEDGQDLLRPLFNELMADEIKQGADVVPRSTKVNVRIGSENSLESIQAYSLVSSTYQKGELPMGSVGVLGPTRMAYEKVIALVTVTADYLSTCLTQVA.

It belongs to the HrcA family.

In terms of biological role, negative regulator of class I heat shock genes (grpE-dnaK-dnaJ and groELS operons). Prevents heat-shock induction of these operons. The chain is Heat-inducible transcription repressor HrcA from Acaryochloris marina (strain MBIC 11017).